The chain runs to 83 residues: Small ribosomal subunit protein eS21 (83 aa).

The residue at position 1 (methionine 1) is an N-acetylmethionine. A Glycyl lysine isopeptide (Lys-Gly) (interchain with G-Cter in SUMO2) cross-link involves residue lysine 41. An N6-acetyllysine modification is found at lysine 81.

The protein belongs to the eukaryotic ribosomal protein eS21 family. As to quaternary structure, component of the 40S small ribosomal subunit.

Its subcellular location is the cytoplasm. The protein resides in the cytosol. It is found in the rough endoplasmic reticulum. In terms of biological role, component of the small ribosomal subunit. The ribosome is a large ribonucleoprotein complex responsible for the synthesis of proteins in the cell. The protein is Small ribosomal subunit protein eS21 (RPS21) of Sus scrofa (Pig).